Consider the following 456-residue polypeptide: MTVSYNQSVATSRPWTFLALIFRWRGSVWSAIWIQYSVWLGLYFLVSAIYRFILSAYQQQIFVRLVDYVNSRMSYVPLDWMLGFFIAGVLRRFWYLYDIIGFIDNIACSTATYIRGDSERAKQYRRNIIRYCELTQVLIFRDLSMKARKRFPTLDTVAAAGFMMPHEKANFDLIQYNYNKYFLPFNWAWALVYNARKEGLIEGDYYVTVISEDIKKFRTGLAWVCNYDWVPLPIIYPTIVCLAVHMYFFVGILARQYVKGSEIDPDMIDLVFPFMTSIQFVFYMGWLKVGEGLLNPWGEDPDDFETNMLIDRNLAMGLKIVDEGYDKTPRLEKDAFWDDTWVPLYSEASAHEKRYHQRQGSLAHIKIGRSVSQVRMVPRDGRRASIVKERIVNVKPGSGIGDILRPSSLLNLMKHASSSRSLERQRSPGSFRMETLTPGSPTNTPIEPIDKIDKKK.

4 helical membrane-spanning segments follow: residues 29–49 (WSAI…VSAI), 83–103 (GFFI…IGFI), 234–254 (IIYP…GILA), and 267–287 (MIDL…MGWL). The disordered stretch occupies residues 416-456 (ASSSRSLERQRSPGSFRMETLTPGSPTNTPIEPIDKIDKKK).

This sequence belongs to the anion channel-forming bestrophin (TC 1.A.46) family. Calcium-sensitive chloride channel subfamily. Forms oligomers.

The protein resides in the cell membrane. Forms chloride channels. The polypeptide is Bestrophin homolog 18 (best-18) (Caenorhabditis elegans).